Consider the following 375-residue polypeptide: Serpin B5 (375 aa).

N-linked (GlcNAc...) asparagine glycans are attached at residues Asn-133, Asn-298, and Asn-361.

It belongs to the serpin family. Ov-serpin subfamily. In terms of assembly, interacts with IRF6.

The protein resides in the secreted. The protein localises to the extracellular space. In terms of biological role, tumor suppressor. It blocks the growth, invasion, and metastatic properties of mammary tumors. As it does not undergo the S (stressed) to R (relaxed) conformational transition characteristic of active serpins, it exhibits no serine protease inhibitory activity. The sequence is that of Serpin B5 (Serpinb5) from Mus musculus (Mouse).